The chain runs to 638 residues: 1-deoxy-D-xylulose-5-phosphate synthase (638 aa).

Residues H79 and 120 to 122 contribute to the thiamine diphosphate site; that span reads AHS. A Mg(2+)-binding site is contributed by D151. Residues 152–153, N180, Y289, and E371 contribute to the thiamine diphosphate site; that span reads GA. Residue N180 participates in Mg(2+) binding.

This sequence belongs to the transketolase family. DXPS subfamily. Homodimer. It depends on Mg(2+) as a cofactor. The cofactor is thiamine diphosphate.

It carries out the reaction D-glyceraldehyde 3-phosphate + pyruvate + H(+) = 1-deoxy-D-xylulose 5-phosphate + CO2. The protein operates within metabolic intermediate biosynthesis; 1-deoxy-D-xylulose 5-phosphate biosynthesis; 1-deoxy-D-xylulose 5-phosphate from D-glyceraldehyde 3-phosphate and pyruvate: step 1/1. In terms of biological role, catalyzes the acyloin condensation reaction between C atoms 2 and 3 of pyruvate and glyceraldehyde 3-phosphate to yield 1-deoxy-D-xylulose-5-phosphate (DXP). The protein is 1-deoxy-D-xylulose-5-phosphate synthase of Rhizobium etli (strain ATCC 51251 / DSM 11541 / JCM 21823 / NBRC 15573 / CFN 42).